An 84-amino-acid polypeptide reads, in one-letter code: Neurotoxin BmK-M11 (84 aa).

The first 19 residues, 1 to 19 (MNYLVMISFALLLMTGVES), serve as a signal peptide directing secretion. The region spanning 21 to 83 (RDAYIAKPEN…VPIRVPGKCH (63 aa)) is the LCN-type CS-alpha/beta domain. Intrachain disulfides connect Cys-31/Cys-82, Cys-35/Cys-55, Cys-41/Cys-65, and Cys-45/Cys-67. A propeptide (removed by a carboxypeptidase) is located at residue Arg-84.

This sequence belongs to the long (4 C-C) scorpion toxin superfamily. Sodium channel inhibitor family. Alpha subfamily. Expressed by the venom gland.

The protein resides in the secreted. Its function is as follows. Alpha toxins bind voltage-independently at site-3 of sodium channels (Nav) and inhibit the inactivation of the activated channels, thereby blocking neuronal transmission. This recombinant toxin selectively inhibits the fast inactivation of mNav1.4/SCN4A (EC(50)=82.3 nM) (tested in HEK293 cells). This is Neurotoxin BmK-M11 from Olivierus martensii (Manchurian scorpion).